The following is a 436-amino-acid chain: Trigger factor (436 aa).

The PPIase FKBP-type domain maps to 162–247; that stretch reads GDRVIIDFEG…LNNVSEPTLP (86 aa).

It belongs to the FKBP-type PPIase family. Tig subfamily.

The protein resides in the cytoplasm. It carries out the reaction [protein]-peptidylproline (omega=180) = [protein]-peptidylproline (omega=0). In terms of biological role, involved in protein export. Acts as a chaperone by maintaining the newly synthesized protein in an open conformation. Functions as a peptidyl-prolyl cis-trans isomerase. The chain is Trigger factor from Neisseria gonorrhoeae (strain ATCC 700825 / FA 1090).